Consider the following 435-residue polypeptide: GTPase Der (435 aa).

EngA-type G domains lie at 4–167 (KIVA…SKND) and 175–350 (TKIA…QSLS). GTP is bound by residues 10-17 (GKPNVGKS), 57-61 (DTGGI), 119-122 (NKYD), 181-188 (GKPNVGKS), 228-232 (DTAGI), and 293-296 (NKWD). Residues 351-435 (VKVKTYVLNE…PINLIFRERK (85 aa)) form the KH-like domain.

It belongs to the TRAFAC class TrmE-Era-EngA-EngB-Septin-like GTPase superfamily. EngA (Der) GTPase family. Associates with the 50S ribosomal subunit.

Its function is as follows. GTPase that plays an essential role in the late steps of ribosome biogenesis. This is GTPase Der from Mycoplasma capricolum subsp. capricolum (strain California kid / ATCC 27343 / NCTC 10154).